The primary structure comprises 138 residues: Homeobox protein HD-11 (138 aa).

The homeobox DNA-binding region spans 30–89 (CTGKQMRKTRLQTCVLNRIFEISRFPSSKTIVDLALLINVHPKSIQKWFQNTRQAIRKKG).

The protein resides in the nucleus. The protein is Homeobox protein HD-11 (HD-11) of Encephalitozoon cuniculi (strain GB-M1) (Microsporidian parasite).